A 328-amino-acid polypeptide reads, in one-letter code: MTAAVKSEISQLPVTRTCCRKAEVSAVLRFAGGLHLVSGRIVIEAELDTGNAARRLKRDILEIFGHSSELIVMAPGGLRRGSRFVVRVVAGGDQLARQTGLVDGRGRPIRGLPPQVVSGATCDAEAAWRGAFLAHGSLTEPGRSSSLEVTCPGPEAALALVGAARRLSIPAKAREVRGVDRVVVRDGDAIGALLTRLGAHDSVLAWEERRLRREVRATANRLANFDDANLRRSARAAVAAGARVQRALEILADDVPEHLAAAGRLRMEHKQASLEELGALADPPLTKDAVAGRIRRLLAMADKRASDLGIAGTDANLGEEELADNLVG.

The H-T-H motif DNA-binding region spans 273 to 306 (SLEELGALADPPLTKDAVAGRIRRLLAMADKRAS).

This sequence belongs to the WhiA family. As to quaternary structure, monomer in solution.

Involved in cell division and chromosome segregation. Involved in sporulation. May coordinate the cessation of aerial hyphae growth and subsequent chromosome segregation and/or septation. Required for expression of the ParB partioning protein during sporogenesis. Activates its own transcription and represses WhiB. Binds with low affinity to its own promoter and to the Parp2 sporulation-specific promoter. Also binds directly to the RNA polymerase sigma factor WhiG, leading to inhibition of WhiG-dependent transcription in a dose-dependent manner. This Streptomyces coelicolor (strain ATCC BAA-471 / A3(2) / M145) protein is Probable cell division protein WhiA.